Here is a 101-residue protein sequence, read N- to C-terminus: Small ribosomal subunit protein uS14 (101 aa).

A compositionally biased stretch (basic and acidic residues) spans 1-10 (MAKKSAIEKN). Residues 1-23 (MAKKSAIEKNNRRKKMTKNAAPK) are disordered. Over residues 11 to 23 (NRRKKMTKNAAPK) the composition is skewed to basic residues.

Part of the 30S ribosomal subunit. Contacts proteins S3 and S10.

Functionally, binds 16S rRNA, required for the assembly of 30S particles and may also be responsible for determining the conformation of the 16S rRNA at the A site. The polypeptide is Small ribosomal subunit protein uS14 (Rhodopseudomonas palustris (strain ATCC BAA-98 / CGA009)).